A 413-amino-acid chain; its full sequence is NAD-dependent dihydropyrimidine dehydrogenase subunit PreT homolog (413 aa).

Glu287 is a binding site for NAD(+).

It belongs to the NADH dehydrogenase family. Heterotetramer of 2 PreA and 2 PreT subunits.

It catalyses the reaction 5,6-dihydrouracil + NAD(+) = uracil + NADH + H(+). The catalysed reaction is 5,6-dihydrothymine + NAD(+) = thymine + NADH + H(+). Functionally, involved in pyrimidine base degradation. Catalyzes physiologically the reduction of uracil to 5,6-dihydrouracil (DHU) by using NADH as a specific cosubstrate. It also catalyzes the reverse reaction and the reduction of thymine to 5,6-dihydrothymine (DHT). In Salmonella typhi, this protein is NAD-dependent dihydropyrimidine dehydrogenase subunit PreT homolog (preT).